A 178-amino-acid polypeptide reads, in one-letter code: Large ribosomal subunit protein bL25 (178 aa).

This sequence belongs to the bacterial ribosomal protein bL25 family. CTC subfamily. As to quaternary structure, part of the 50S ribosomal subunit; part of the 5S rRNA/L5/L18/L25 subcomplex. Contacts the 5S rRNA. Binds to the 5S rRNA independently of L5 and L18.

In terms of biological role, this is one of the proteins that binds to the 5S RNA in the ribosome where it forms part of the central protuberance. This chain is Large ribosomal subunit protein bL25, found in Helicobacter pylori (strain Shi470).